The chain runs to 283 residues: Bifunctional protein FolD (283 aa).

Residues 166 to 168, Ser-191, and Ile-232 each bind NADP(+); that span reads GQS.

It belongs to the tetrahydrofolate dehydrogenase/cyclohydrolase family. As to quaternary structure, homodimer.

The catalysed reaction is (6R)-5,10-methylene-5,6,7,8-tetrahydrofolate + NADP(+) = (6R)-5,10-methenyltetrahydrofolate + NADPH. The enzyme catalyses (6R)-5,10-methenyltetrahydrofolate + H2O = (6R)-10-formyltetrahydrofolate + H(+). Its pathway is one-carbon metabolism; tetrahydrofolate interconversion. Functionally, catalyzes the oxidation of 5,10-methylenetetrahydrofolate to 5,10-methenyltetrahydrofolate and then the hydrolysis of 5,10-methenyltetrahydrofolate to 10-formyltetrahydrofolate. This chain is Bifunctional protein FolD, found in Laribacter hongkongensis (strain HLHK9).